A 174-amino-acid polypeptide reads, in one-letter code: Negative modulator of initiation of replication (174 aa).

Belongs to the SeqA family. In terms of assembly, homodimer. Polymerizes to form helical filaments.

Its subcellular location is the cytoplasm. Negative regulator of replication initiation, which contributes to regulation of DNA replication and ensures that replication initiation occurs exactly once per chromosome per cell cycle. Binds to pairs of hemimethylated GATC sequences in the oriC region, thus preventing assembly of replication proteins and re-initiation at newly replicated origins. Repression is relieved when the region becomes fully methylated. The protein is Negative modulator of initiation of replication of Pseudoalteromonas atlantica (strain T6c / ATCC BAA-1087).